The primary structure comprises 189 residues: uncharacterized protein (189 aa).

This is an uncharacterized protein from Danio rerio (Zebrafish).